The primary structure comprises 4083 residues: Dynein axonemal heavy chain 3 (4083 aa).

Disordered stretches follow at residues 1–37 (MSDT…VSAN) and 111–132 (DKTS…PSKK). Residues 1–1357 (MSDTNCSAQK…HVQMITTEAL (1357 aa)) form a stem region. Coiled-coil stretches lie at residues 1026 to 1052 (IKPI…AWLK) and 1108 to 1133 (RMTE…YLEK). AAA regions lie at residues 1358-1579 (YGYE…VLTA), 1639-1870 (EALN…LHCK), 2003-2251 (TIPA…VIQG), and 2362-2613 (EFNS…LLRH). ATP contacts are provided by residues 1396 to 1403 (GPAGTGKT), 1677 to 1684 (GDPMGGKT), 2041 to 2048 (GPTGTGKS), and 2401 to 2408 (GIGGSGRQ). A stalk region spans residues 2628–2927 (FKTLLNSKRQ…NSLEKNIEIC (300 aa)). The stretch at 2651–2714 (QKLEFASSQV…DEKEANAAAA (64 aa)) forms a coiled coil. AAA stretches follow at residues 3012–3242 (LGDP…EISE) and 3455–3679 (IQNF…QIQM).

This sequence belongs to the dynein heavy chain family. In terms of assembly, consists of at least two heavy chains and a number of intermediate and light chains.

It is found in the cytoplasm. The protein localises to the cytoskeleton. It localises to the cilium axoneme. Force generating protein of respiratory cilia. Produces force towards the minus ends of microtubules. Dynein has ATPase activity; the force-producing power stroke is thought to occur on release of ADP. Involved in sperm motility; implicated in sperm flagellar assembly. This is Dynein axonemal heavy chain 3 (Dnah3) from Mus musculus (Mouse).